Here is a 64-residue protein sequence, read N- to C-terminus: Large ribosomal subunit protein bL35 (64 aa).

The interval 1-22 is disordered; sequence MPKAKTHSGASKRFRRTGTGKI.

The protein belongs to the bacterial ribosomal protein bL35 family.

This is Large ribosomal subunit protein bL35 from Mycobacterium tuberculosis (strain ATCC 25177 / H37Ra).